Here is a 206-residue protein sequence, read N- to C-terminus: Glycerol-3-phosphate acyltransferase 1 (206 aa).

Transmembrane regions (helical) follow at residues 7–27, 54–74, 81–101, 114–134, and 155–175; these read LVIG…KIFL, ILTC…VYFI, DLSF…WNHF, IVFF…FLVI, and WINF…IMIF.

This sequence belongs to the PlsY family. Probably interacts with PlsX.

The protein resides in the cell membrane. The enzyme catalyses an acyl phosphate + sn-glycerol 3-phosphate = a 1-acyl-sn-glycero-3-phosphate + phosphate. It participates in lipid metabolism; phospholipid metabolism. Its function is as follows. Catalyzes the transfer of an acyl group from acyl-phosphate (acyl-PO(4)) to glycerol-3-phosphate (G3P) to form lysophosphatidic acid (LPA). This enzyme utilizes acyl-phosphate as fatty acyl donor, but not acyl-CoA or acyl-ACP. In Lactobacillus johnsonii (strain CNCM I-12250 / La1 / NCC 533), this protein is Glycerol-3-phosphate acyltransferase 1.